Here is a 336-residue protein sequence, read N- to C-terminus: MTQAQNHIVPPGSKVLVTGANGYIASHIIKVLLDLGYLVQGTVRTPMPWLTEYFEKRYGSGRFELIVVSDFQQSDAFDESVKGVSGVIHVAQGLPSSTAAETVESATAYTVNGVVNLLKAASTKPTIKRVVLTSSIVAAGYPAGKGFKLDVDTWDKSLEQASKGGTTVPIYRACKVEGERQAWKWVEKNQPHFELNTVLPWLTLGKILHPNIGGSTMGYVSGLLKGDTTPFKFLPLPWFVDVEDTARLHAIALISPSVRSERLFAAATPFIWGDVIEILKRIQPNNARIPAAPVKEEPTIGDIVPAARAEKLLRETFGQRGWTPLEVSLEGGIARE.

Tyrosine 171 is a binding site for NADP(+).

The protein belongs to the NAD(P)-dependent epimerase/dehydratase family. Dihydroflavonol-4-reductase subfamily.

The protein operates within secondary metabolite biosynthesis; terpenoid biosynthesis. In terms of biological role, ketoreductase; part of the gene cluster that mediates the biosynthesis of andrastins, meroterpenoid compounds that exhibit inhibitory activity against ras farnesyltransferase, suggesting that they could be promising leads for antitumor agents. The first step of the pathway is the synthesis of 3,5-dimethylorsellinic acid (DMOA) by the polyketide synthase adrD via condensation of one acetyl-CoA starter unit with 3 malonyl-CoA units and 2 methylations. DMAO is then converted to farnesyl-DMAO by the prenyltransferase adrG. The methyltransferase adrK catalyzes the methylation of the carboxyl group of farnesyl-DMAO to farnesyl-DMAO methyl ester which is further converted to epoxyfarnesyl-DMAO methyl ester by the FAD-dependent monooxygenase adrH. The terpene cyclase adrI then catalyzes the carbon skeletal rearrangement to generate the andrastin E, the first compound in the pathway having the andrastin scaffold, with the tetracyclic ring system. The post-cyclization tailoring enzymes adrF, adrE, adrJ, and adrA, are involved in the conversion of andrastin E into andrastin A. The short chain dehydrogenase adrF is responsible for the oxidation of the C-3 a hydroxyl group of andrastin E to yield the corresponding ketone, andrastin D. The ketoreductase adrE stereoselectively reduces the carbonyl moiety to reverse the stereochemistry of the C-3 position to yield andrastin F. The acetyltransferase adrJ is the acetyltransferase that attaches the acetyl group to the C-3 hydroxyl group of andrastin F to yield andrastin C. Finally, the cytochrome P450 monooxygenase adrA catalyzes two sequential oxidation reactions of the C-23 methyl group, to generate the corresponding alcohol andrastin B, and aldehyde andrastin A. The sequence is that of Ketoreductase adrE from Penicillium rubens (strain ATCC 28089 / DSM 1075 / NRRL 1951 / Wisconsin 54-1255) (Penicillium chrysogenum).